The sequence spans 89 residues: MKFVFASFALFVIFLCFSQSLSQSYFRCRDNEVFDNCISNCGPPRCSNILNTYPCTNLGPLCTPGCKCKDGRVYDNQGRCVLQTECFQK.

Positions 1-22 (MKFVFASFALFVIFLCFSQSLS) are cleaved as a signal peptide. Disulfide bonds link C28–C66, C37–C62, C41–C55, C46–C86, and C68–C80. Residues 28 to 86 (CRDNEVFDNCISNCGPPRCSNILNTYPCTNLGPLCTPGCKCKDGRVYDNQGRCVLQTEC) form the TIL domain.

This sequence belongs to the serine protease inhibitor-like (TIL domain-containing) family. Expressed by the venom gland.

Its subcellular location is the secreted. Functionally, serine protease inhibitor. The sequence is that of Venom peptide BmKAPI from Olivierus martensii (Manchurian scorpion).